The primary structure comprises 131 residues: Small ribosomal subunit protein bS6 (131 aa).

Residues S100 to E131 form a disordered region. Over residues K104–F116 the composition is skewed to basic and acidic residues. A compositionally biased stretch (acidic residues) spans T120–E131.

Belongs to the bacterial ribosomal protein bS6 family.

In terms of biological role, binds together with bS18 to 16S ribosomal RNA. This is Small ribosomal subunit protein bS6 from Erwinia tasmaniensis (strain DSM 17950 / CFBP 7177 / CIP 109463 / NCPPB 4357 / Et1/99).